Consider the following 582-residue polypeptide: METESGNQEKVMEEESTEKKKEVEKKKRSRVKQVLADIAKQVDFWFGDANLHKDRFLREQIEKSRDGYVDISLLVSFNKMKKLTTDGKLIARALRSSAVVELDLEGTRIRRKKPLGERPKDEDERTVYVELLPKNVNHSWIERVFGKCGNVVYISIPHYKSTGDPKGFAFVEFETKEQAAKAIEFLNNPPEEAPRKPGIFPKTVKNKPIPALRVVEEKKKKKKKKGRMKKEDNIQAKEENMDTSNTSISKMKRSRPTSEGSDIESTEPQKQCSKKKKKRDRVEASSLPEVRTGKRKRSSSEDAESLAPRSKVKKIIQKDIIKEASEASKENRDIEISTEEEKDTGDLKDSSLLKTKRKHKKKHKERHKMGEEVIPLRVLSKSEWMDLKKEYLALQKASMASLKKTISQIKSESEMETDSGVPQNTGMKNEKTANREECRTQEKVNATGPQFVSGVIVKIISTEPLPGRKQVRDTLAAISEVLYVDLLEGDTECHARFKTPEDAQAVINAYTEINKKHCWKLEILSGDHEQRYWQKILVDRQAKLNQPREKKRGTEKLITKAEKIRLAKTQQASKHIRFSEYD.

Met1 carries the post-translational modification N-acetylmethionine. Residues 1-27 (METESGNQEKVMEEESTEKKKEVEKKK) are disordered. A compositionally biased stretch (basic and acidic residues) spans 10–25 (KVMEEESTEKKKEVEK). The HTH La-type RNA-binding domain occupies 28-122 (RSRVKQVLAD…KPLGERPKDE (95 aa)). One can recognise an RRM domain in the interval 125–203 (RTVYVELLPK…PRKPGIFPKT (79 aa)). Disordered regions lie at residues 188 to 368 (NPPE…ERHK) and 410 to 442 (KSES…RTQE). Basic residues predominate over residues 219-228 (KKKKKKKGRM). Over residues 229–240 (KKEDNIQAKEEN) the composition is skewed to basic and acidic residues. A Glycyl lysine isopeptide (Lys-Gly) (interchain with G-Cter in SUMO2) cross-link involves residue Lys237. The residue at position 257 (Thr257) is a Phosphothreonine. Phosphoserine is present on residues Ser258, Ser261, Ser273, Ser298, Ser299, and Ser300. Positions 316-335 (IQKDIIKEASEASKENRDIE) are enriched in basic and acidic residues. Residue Ser337 is modified to Phosphoserine. Thr338 carries the phosphothreonine modification. Residue Ser351 is modified to Phosphoserine. A compositionally biased stretch (basic residues) spans 354-367 (KTKRKHKKKHKERH). Lys410 is covalently cross-linked (Glycyl lysine isopeptide (Lys-Gly) (interchain with G-Cter in SUMO2)). Basic and acidic residues predominate over residues 428–442 (KNEKTANREECRTQE). Residues 450-563 (QFVSGVIVKI…TEKLITKAEK (114 aa)) form the xRRM domain.

It belongs to the LARP7 family. Core component of the 7SK RNP complex, at least composed of 7SK RNA, LARP7, MEPCE, HEXIM1 (or HEXIM2) and P-TEFb (composed of CDK9 and CCNT1/cyclin-T1). Interacts with METTL16. Interacts with RBM7; upon genotoxic stress this interaction is enhanced, triggering the release of inactive P-TEFb complex from the core, yielding to P-TEFb complex activation. Associates with box C/D small nucleolar ribonucleoprotein (snoRNP) complexes.

Its subcellular location is the nucleus. The protein resides in the nucleoplasm. RNA-binding protein that specifically binds distinct small nuclear RNA (snRNAs) and regulates their processing and function. Specifically binds the 7SK snRNA (7SK RNA) and acts as a core component of the 7SK ribonucleoprotein (RNP) complex, thereby acting as a negative regulator of transcription elongation by RNA polymerase II. The 7SK RNP complex sequesters the positive transcription elongation factor b (P-TEFb) in a large inactive 7SK RNP complex preventing RNA polymerase II phosphorylation and subsequent transcriptional elongation. The 7SK RNP complex also promotes snRNA gene transcription by RNA polymerase II via interaction with the little elongation complex (LEC). LARP7 specifically binds to the highly conserved 3'-terminal U-rich stretch of 7SK RNA; on stimulation, remains associated with 7SK RNA, whereas P-TEFb is released from the complex. LARP7 also acts as a regulator of mRNA splicing fidelity by promoting U6 snRNA processing. Specifically binds U6 snRNAs and associates with a subset of box C/D RNP complexes: promotes U6 snRNA 2'-O-methylation by facilitating U6 snRNA loading into box C/D RNP complexes. U6 snRNA 2'-O-methylation is required for mRNA splicing fidelity. Binds U6 snRNAs with a 5'-CAGGG-3' sequence motif. U6 snRNA processing is required for spermatogenesis. The protein is La-related protein 7 of Homo sapiens (Human).